The primary structure comprises 404 residues: Keratin, type I cuticular Ha3-II (404 aa).

Residues 1–56 (MPYNFCLPSLSCRTSCSSRPCVPPSCHGYTLPGACNIPANVSNCNWFCEGSFNGSE) form a head region. Residues 56–367 (EKETMQFLND…SLLESEDCKL (312 aa)) form the IF rod domain. The interval 57 to 91 (KETMQFLNDRLASYLEKVRQLERDNAELENLIRER) is coil 1A. Residues 92-102 (SQQQEPLLCPS) are linker 1. The coil 1B stretch occupies residues 103-203 (YQSYFKTIEE…HEQEVNTLRC (101 aa)). Positions 204–219 (QLGDRLNVEVDAAPAV) are linker 12. Residues 220–363 (DLNQVLNETR…NTYRSLLESE (144 aa)) are coil 2. Residues 364 to 404 (DCKLPSNPCATTNACEKPIGSCVTNPCGPRSRCGPCNTFGY) are tail.

This sequence belongs to the intermediate filament family.

The chain is Keratin, type I cuticular Ha3-II (KRT33B) from Homo sapiens (Human).